The chain runs to 219 residues: Large ribosomal subunit protein uL3 (219 aa).

Residues 136–156 (GASHGAHRNHRKPGSIGGCAT) form a disordered region.

It belongs to the universal ribosomal protein uL3 family. Part of the 50S ribosomal subunit. Forms a cluster with proteins L14 and L19.

Functionally, one of the primary rRNA binding proteins, it binds directly near the 3'-end of the 23S rRNA, where it nucleates assembly of the 50S subunit. In Kineococcus radiotolerans (strain ATCC BAA-149 / DSM 14245 / SRS30216), this protein is Large ribosomal subunit protein uL3.